The sequence spans 198 residues: SCO2-like protein RF_0043 (198 aa).

This sequence belongs to the SCO1/2 family.

This is SCO2-like protein RF_0043 from Rickettsia felis (strain ATCC VR-1525 / URRWXCal2) (Rickettsia azadi).